We begin with the raw amino-acid sequence, 389 residues long: Probable DNA double-strand break repair nuclease NurA (389 aa).

Residues Asp74 and Asp151 each coordinate Mn(2+).

The protein belongs to the NurA family. It depends on Mn(2+) as a cofactor.

Functionally, involved in DNA double-strand break (DSB) repair. Probably acts with HerA to stimulate resection of the 5' strand and produce the long 3' single-strand that is required for RadA loading. The sequence is that of Probable DNA double-strand break repair nuclease NurA from Methanocaldococcus jannaschii (strain ATCC 43067 / DSM 2661 / JAL-1 / JCM 10045 / NBRC 100440) (Methanococcus jannaschii).